Consider the following 207-residue polypeptide: ATP-dependent Clp protease proteolytic subunit (207 aa).

S111 (nucleophile) is an active-site residue. H136 is an active-site residue.

Belongs to the peptidase S14 family. In terms of assembly, fourteen ClpP subunits assemble into 2 heptameric rings which stack back to back to give a disk-like structure with a central cavity, resembling the structure of eukaryotic proteasomes.

It is found in the cytoplasm. The enzyme catalyses Hydrolysis of proteins to small peptides in the presence of ATP and magnesium. alpha-casein is the usual test substrate. In the absence of ATP, only oligopeptides shorter than five residues are hydrolyzed (such as succinyl-Leu-Tyr-|-NHMec, and Leu-Tyr-Leu-|-Tyr-Trp, in which cleavage of the -Tyr-|-Leu- and -Tyr-|-Trp bonds also occurs).. Functionally, cleaves peptides in various proteins in a process that requires ATP hydrolysis. Has a chymotrypsin-like activity. Plays a major role in the degradation of misfolded proteins. This chain is ATP-dependent Clp protease proteolytic subunit, found in Yersinia enterocolitica serotype O:8 / biotype 1B (strain NCTC 13174 / 8081).